The primary structure comprises 373 residues: Dual-specificity RNA methyltransferase RlmN (373 aa).

The Proton acceptor role is filled by glutamate 94. Residues 100-339 (EDDRATLCVS…VIVRKTRGDD (240 aa)) enclose the Radical SAM core domain. The cysteines at positions 107 and 344 are disulfide-linked. 3 residues coordinate [4Fe-4S] cluster: cysteine 114, cysteine 118, and cysteine 121. Residues 168-169 (GE), serine 200, 222-224 (SIH), and asparagine 301 contribute to the S-adenosyl-L-methionine site. The active-site S-methylcysteine intermediate is cysteine 344.

The protein belongs to the radical SAM superfamily. RlmN family. It depends on [4Fe-4S] cluster as a cofactor.

It localises to the cytoplasm. It catalyses the reaction adenosine(2503) in 23S rRNA + 2 reduced [2Fe-2S]-[ferredoxin] + 2 S-adenosyl-L-methionine = 2-methyladenosine(2503) in 23S rRNA + 5'-deoxyadenosine + L-methionine + 2 oxidized [2Fe-2S]-[ferredoxin] + S-adenosyl-L-homocysteine. The catalysed reaction is adenosine(37) in tRNA + 2 reduced [2Fe-2S]-[ferredoxin] + 2 S-adenosyl-L-methionine = 2-methyladenosine(37) in tRNA + 5'-deoxyadenosine + L-methionine + 2 oxidized [2Fe-2S]-[ferredoxin] + S-adenosyl-L-homocysteine. Functionally, specifically methylates position 2 of adenine 2503 in 23S rRNA and position 2 of adenine 37 in tRNAs. m2A2503 modification seems to play a crucial role in the proofreading step occurring at the peptidyl transferase center and thus would serve to optimize ribosomal fidelity. The sequence is that of Dual-specificity RNA methyltransferase RlmN from Shewanella baltica (strain OS223).